The primary structure comprises 279 residues: Phycobilisome 34.5 kDa linker polypeptide, phycoerythrocyanin-associated, rod (279 aa).

The 177-residue stretch at 2-178 (STSVAERLAI…LYRGRANSDN (177 aa)) folds into the PBS-linker domain. Residues 226–278 (ARMFIVEAIAGTLNTNVAVRRSRQVYTVPYDRLSATYQEIHKRGGKIVKITPA) form the CpcD-like domain.

This sequence belongs to the phycobilisome linker protein family.

The protein resides in the cellular thylakoid membrane. Functionally, rod linker protein, associated with phycoerythrocyanin. Linker polypeptides determine the state of aggregation and the location of the disk-shaped phycobiliprotein units within the phycobilisome and modulate their spectroscopic properties in order to mediate a directed and optimal energy transfer. The chain is Phycobilisome 34.5 kDa linker polypeptide, phycoerythrocyanin-associated, rod (pecC) from Mastigocladus laminosus (Fischerella sp.).